Here is a 193-residue protein sequence, read N- to C-terminus: Orotate phosphoribosyltransferase (193 aa).

114 to 122 (EDVITTGGS) contacts 5-phospho-alpha-D-ribose 1-diphosphate. 2 residues coordinate orotate: threonine 118 and arginine 146.

Belongs to the purine/pyrimidine phosphoribosyltransferase family. PyrE subfamily. Homodimer. Mg(2+) is required as a cofactor.

It carries out the reaction orotidine 5'-phosphate + diphosphate = orotate + 5-phospho-alpha-D-ribose 1-diphosphate. Its pathway is pyrimidine metabolism; UMP biosynthesis via de novo pathway; UMP from orotate: step 1/2. In terms of biological role, catalyzes the transfer of a ribosyl phosphate group from 5-phosphoribose 1-diphosphate to orotate, leading to the formation of orotidine monophosphate (OMP). In Chlorobaculum parvum (strain DSM 263 / NCIMB 8327) (Chlorobium vibrioforme subsp. thiosulfatophilum), this protein is Orotate phosphoribosyltransferase.